A 584-amino-acid polypeptide reads, in one-letter code: Aspartate--tRNA(Asp/Asn) ligase (584 aa).

Glu-177 serves as a coordination point for L-aspartate. The aspartate stretch occupies residues 201-204 (QLFK). An L-aspartate-binding site is contributed by Arg-223. ATP contacts are provided by residues 223 to 225 (RDE) and Gln-232. His-447 contacts L-aspartate. Glu-481 is a binding site for ATP. Arg-488 contacts L-aspartate. 533–536 (GLDR) serves as a coordination point for ATP.

Belongs to the class-II aminoacyl-tRNA synthetase family. Type 1 subfamily. As to quaternary structure, homodimer.

The protein resides in the cytoplasm. It catalyses the reaction tRNA(Asx) + L-aspartate + ATP = L-aspartyl-tRNA(Asx) + AMP + diphosphate. Its function is as follows. Aspartyl-tRNA synthetase with relaxed tRNA specificity since it is able to aspartylate not only its cognate tRNA(Asp) but also tRNA(Asn). Reaction proceeds in two steps: L-aspartate is first activated by ATP to form Asp-AMP and then transferred to the acceptor end of tRNA(Asp/Asn). The sequence is that of Aspartate--tRNA(Asp/Asn) ligase from Chlamydia pneumoniae (Chlamydophila pneumoniae).